Reading from the N-terminus, the 562-residue chain is Arginine--tRNA ligase (562 aa).

The short motif at 129–139 is the 'HIGH' region element; it reads ANPTGPLHVGH.

This sequence belongs to the class-I aminoacyl-tRNA synthetase family. In terms of assembly, monomer.

It is found in the cytoplasm. It catalyses the reaction tRNA(Arg) + L-arginine + ATP = L-arginyl-tRNA(Arg) + AMP + diphosphate. This Xanthomonas axonopodis pv. citri (strain 306) protein is Arginine--tRNA ligase.